Reading from the N-terminus, the 350-residue chain is ADP-ribosylhydrolase ARH3 (350 aa).

Mg(2+) contacts are provided by glutamate 27, threonine 57, aspartate 58, and aspartate 59. Aspartate 58 is a binding site for substrate. Substrate-binding positions include 127–133 (KGSYGNG), histidine 163, leucine 216, and isoleucine 252. Positions 295, 297, and 298 each coordinate Mg(2+).

It belongs to the ADP-ribosylglycohydrolase family. In terms of assembly, monomer. It depends on Mg(2+) as a cofactor.

It localises to the nucleus. The protein resides in the cytoplasm. It is found in the chromosome. The protein localises to the mitochondrion matrix. The enzyme catalyses [(1''-&gt;2')-ADP-alpha-D-ribose](n) + H2O = [(1''-&gt;2')-ADP-alpha-D-ribose](n-1) + ADP-D-ribose. It carries out the reaction 1''-O-acetyl-ADP-alpha-D-ribose + H2O = ADP-D-ribose + acetate + H(+). The catalysed reaction is O-(ADP-D-ribosyl)-L-seryl-[protein] + H2O = ADP-D-ribose + L-seryl-[protein]. It catalyses the reaction alpha-NAD(+) + H2O = ADP-D-ribose + nicotinamide + H(+). Its activity is regulated as follows. The protein undergoes a dramatic conformational switch from closed to open states upon substrate-binding, which enables specific substrate recognition for the 1''-O-linkage. The glutamate flap (Glu-27) blocks substrate entrance to Mg(2+) in the unliganded closed state. In presence of substrate, Glu-27 is ejected from the active site: this closed-to-open transition significantly widens the substrate-binding channel and precisely positions the scissile 1''-O-linkage for cleavage while securing tightly 2'- and 3'-hydroxyls of ADP-ribose. Functionally, ADP-ribosylhydrolase that preferentially hydrolyzes the scissile alpha-O-linkage attached to the anomeric C1'' position of ADP-ribose and acts on different substrates, such as proteins ADP-ribosylated on serine and threonine, free poly(ADP-ribose) and O-acetyl-ADP-D-ribose. Specifically acts as a serine mono-ADP-ribosylhydrolase by mediating the removal of mono-ADP-ribose attached to serine residues on proteins, thereby playing a key role in DNA damage response. Serine ADP-ribosylation of proteins constitutes the primary form of ADP-ribosylation of proteins in response to DNA damage. Does not hydrolyze ADP-ribosyl-arginine, -cysteine, -diphthamide, or -asparagine bonds. Also able to degrade protein free poly(ADP-ribose), which is synthesized in response to DNA damage: free poly(ADP-ribose) acts as a potent cell death signal and its degradation by ADPRHL2 protects cells from poly(ADP-ribose)-dependent cell death, a process named parthanatos. Also hydrolyzes free poly(ADP-ribose) in mitochondria. Specifically digests O-acetyl-ADP-D-ribose, a product of deacetylation reactions catalyzed by sirtuins. Specifically degrades 1''-O-acetyl-ADP-D-ribose isomer, rather than 2''-O-acetyl-ADP-D-ribose or 3''-O-acetyl-ADP-D-ribose isomers. The chain is ADP-ribosylhydrolase ARH3 (adprs) from Xenopus tropicalis (Western clawed frog).